We begin with the raw amino-acid sequence, 297 residues long: Nuclear transcription factor Y subunit B-11 (297 aa).

Positions 1-25 (MKSRKSYGHLLSPVGSPPLDNESGE) are disordered. The DNA-binding element occupies 63-69 (LPIANVS). Positions 90-101 (VQECVSEFISFV) are subunit association domain (SAD).

It belongs to the NFYB/HAP3 subunit family. In terms of assembly, heterotrimeric transcription factor composed of three components, NF-YA, NF-YB and NF-YC. NF-YB and NF-YC must interact and dimerize for NF-YA association and DNA binding. Interacts with NFYC2, NFYC4 and NFYC6. As to expression, expressed in roots, culms, nodes, leaf blades, leaf sheaths and young panicles.

It localises to the nucleus. The protein localises to the cytoplasm. In terms of biological role, probable transcription factor involved in the regulation of flowering time under long day (LD) conditions. Functions as a repressor of flowering, independently of HD1 and GHD7. Controls flowering time by negatively regulating the expression of EHD1 and HD3A. Regulates plant height by promoting cell elongation in the internodes. Component of the NF-Y/HAP transcription factor complex. The polypeptide is Nuclear transcription factor Y subunit B-11 (HD5) (Oryza sativa subsp. japonica (Rice)).